Consider the following 243-residue polypeptide: Clathrin light chain A (243 aa).

The residue at position 1 (M1) is a Blocked amino end (Met). Disordered stretches follow at residues 1-22 (MAEL…GVAG) and 49-87 (ILDG…GPTD). The span at 10 to 20 (PAGGPALGNGV) shows a compositional bias: gly residues. The tract at residues 95-157 (VDRLQSEPES…QLQKTKANNR (63 aa)) is involved in binding clathrin heavy chain. Residues S100 and S201 each carry the phosphoserine modification. K218 bears the N6-acetyllysine mark. Position 231 is a phosphoserine (S231). The residue at position 237 (K237) is an N6-acetyllysine.

It belongs to the clathrin light chain family. As to quaternary structure, clathrin coats are formed from molecules containing 3 heavy chains and 3 light chains. Interacts with CALY; the interaction stimulates clathrin self-assembly and clathrin-mediated endocytosis. Interacts with CKAP5 and TACC3 forming the TACC3/ch-TOG/clathrin complex located at spindle inter-microtubules bridges; the complex implicates clathrin triskelions.

The protein resides in the cytoplasmic vesicle membrane. The protein localises to the membrane. It localises to the coated pit. It is found in the cytoplasm. Its subcellular location is the cytoskeleton. The protein resides in the spindle. Functionally, clathrin is the major protein of the polyhedral coat of coated pits and vesicles. Acts as a component of the TACC3/ch-TOG/clathrin complex proposed to contribute to stabilization of kinetochore fibers of the mitotic spindle by acting as inter-microtubule bridge. In Bos taurus (Bovine), this protein is Clathrin light chain A (CLTA).